The primary structure comprises 105 residues: Thioredoxin (105 aa).

The Thioredoxin domain maps to 1–105 (MVNNVTDISF…SLLDWINKSI (105 aa)). A disulfide bond links C30 and C33.

Belongs to the thioredoxin family.

Component of the thioredoxin-thioredoxin reductase system. Participates in various redox reactions through the reversible oxidation of its active center dithiol to a disulfide and catalyzes dithiol-disulfide exchange reactions. The protein is Thioredoxin (trxA) of Rickettsia typhi (strain ATCC VR-144 / Wilmington).